Reading from the N-terminus, the 475-residue chain is Aspartyl/glutamyl-tRNA(Asn/Gln) amidotransferase subunit B (475 aa).

It belongs to the GatB/GatE family. GatB subfamily. Heterotrimer of A, B and C subunits.

It carries out the reaction L-glutamyl-tRNA(Gln) + L-glutamine + ATP + H2O = L-glutaminyl-tRNA(Gln) + L-glutamate + ADP + phosphate + H(+). The enzyme catalyses L-aspartyl-tRNA(Asn) + L-glutamine + ATP + H2O = L-asparaginyl-tRNA(Asn) + L-glutamate + ADP + phosphate + 2 H(+). Its function is as follows. Allows the formation of correctly charged Asn-tRNA(Asn) or Gln-tRNA(Gln) through the transamidation of misacylated Asp-tRNA(Asn) or Glu-tRNA(Gln) in organisms which lack either or both of asparaginyl-tRNA or glutaminyl-tRNA synthetases. The reaction takes place in the presence of glutamine and ATP through an activated phospho-Asp-tRNA(Asn) or phospho-Glu-tRNA(Gln). This Staphylococcus aureus (strain MRSA252) protein is Aspartyl/glutamyl-tRNA(Asn/Gln) amidotransferase subunit B.